The chain runs to 164 residues: Siroheme decarboxylase alpha subunit (164 aa).

The protein belongs to the Ahb/Nir family. As to quaternary structure, forms a heterodimer composed of AhbA and AhbB.

It catalyses the reaction siroheme + 2 H(+) = 12,18-didecarboxysiroheme + 2 CO2. It functions in the pathway porphyrin-containing compound metabolism; protoheme biosynthesis. Involved in siroheme-dependent heme b biosynthesis. Catalyzes the decarboxylation of siroheme into didecarboxysiroheme. This chain is Siroheme decarboxylase alpha subunit, found in Oleidesulfovibrio alaskensis (strain ATCC BAA-1058 / DSM 17464 / G20) (Desulfovibrio alaskensis).